The sequence spans 416 residues: Na(+)/H(+) antiporter NhaA (416 aa).

Helical transmembrane passes span Gly-39–Ala-59, Leu-82–Ile-102, Leu-119–Val-139, Gly-146–Gly-166, Val-175–Phe-195, Gly-198–Leu-218, Ala-234–Leu-254, Pro-281–Gly-301, Leu-315–Ala-335, Trp-353–Ile-373, and Gly-390–Gln-410.

It belongs to the NhaA Na(+)/H(+) (TC 2.A.33) antiporter family.

It localises to the cell inner membrane. It catalyses the reaction Na(+)(in) + 2 H(+)(out) = Na(+)(out) + 2 H(+)(in). Its function is as follows. Na(+)/H(+) antiporter that extrudes sodium in exchange for external protons. This chain is Na(+)/H(+) antiporter NhaA, found in Acidovorax sp. (strain JS42).